We begin with the raw amino-acid sequence, 76 residues long: Probable insulin-like peptide alpha-type 3 (76 aa).

An N-terminal signal peptide occupies residues 1–18 (MFVLLIILSIILAQVTDA). 3 disulfide bridges follow: Cys28/Cys58, Cys40/Cys71, and Cys46/Cys72.

It belongs to the insulin family.

It localises to the secreted. The protein is Probable insulin-like peptide alpha-type 3 (ins-23) of Caenorhabditis elegans.